A 503-amino-acid chain; its full sequence is Maturase K (503 aa).

This sequence belongs to the intron maturase 2 family. MatK subfamily.

Its subcellular location is the plastid. The protein resides in the chloroplast. In terms of biological role, usually encoded in the trnK tRNA gene intron. Probably assists in splicing its own and other chloroplast group II introns. The polypeptide is Maturase K (Thryptomene saxicola (Rock thryptomene)).